We begin with the raw amino-acid sequence, 252 residues long: U2 small nuclear ribonucleoprotein A' (252 aa).

LRR repeat units follow at residues 41-62 (PHDA…PLSP), 63-84 (RIRT…LPNA), and 87-108 (NLKN…EVLG). The LRRCT domain occupies 121 to 159 (NPVTKKENYRYWVLWLCPQVRFLDYVKVKDAERQKAKEL).

It belongs to the U2 small nuclear ribonucleoprotein A family. As to quaternary structure, associated with the spliceosome.

It localises to the nucleus. In terms of biological role, involved in pre-mRNA splicing. In Neurospora crassa (strain ATCC 24698 / 74-OR23-1A / CBS 708.71 / DSM 1257 / FGSC 987), this protein is U2 small nuclear ribonucleoprotein A' (lea-1).